The chain runs to 487 residues: N-succinylglutamate 5-semialdehyde dehydrogenase (487 aa).

221–226 (GSSDTG) lines the NAD(+) pocket. Catalysis depends on residues Glu244 and Cys278.

This sequence belongs to the aldehyde dehydrogenase family. AstD subfamily.

It carries out the reaction N-succinyl-L-glutamate 5-semialdehyde + NAD(+) + H2O = N-succinyl-L-glutamate + NADH + 2 H(+). It participates in amino-acid degradation; L-arginine degradation via AST pathway; L-glutamate and succinate from L-arginine: step 4/5. Functionally, catalyzes the NAD-dependent reduction of succinylglutamate semialdehyde into succinylglutamate. This chain is N-succinylglutamate 5-semialdehyde dehydrogenase, found in Burkholderia vietnamiensis (strain G4 / LMG 22486) (Burkholderia cepacia (strain R1808)).